The following is a 233-amino-acid chain: C-type lectin domain family 2 member D5 (233 aa).

The segment at 1 to 52 (MPSSAHLQDPPPLLSRTLTQNEGQTSLRQSSSCGPSAASASESLSGSTESRI) is disordered. Topologically, residues 1-76 (MPSSAHLQDP…PLEYPAGLYC (76 aa)) are cytoplasmic. Positions 16–29 (RTLTQNEGQTSLRQ) are enriched in polar residues. Residues 30 to 50 (SSSCGPSAASASESLSGSTES) are compositionally biased toward low complexity. The chain crosses the membrane as a helical; Signal-anchor for type II membrane protein span at residues 77-97 (CYVVIIVLSVAVVALSVALSV). Over 98–233 (KKTAQISTIN…KPNSYTSQCL (136 aa)) the chain is Extracellular. The C-type lectin domain maps to 119 to 228 (VGNKCFYFNE…KSICRKPNSY (110 aa)). The N-linked (GlcNAc...) asparagine glycan is linked to Asn132.

The protein resides in the cell membrane. Lectin-type cell surface receptor. This Rattus norvegicus (Rat) protein is C-type lectin domain family 2 member D5 (Ocil).